The primary structure comprises 161 residues: UPF0225 protein HI_0277 (161 aa).

The protein belongs to the UPF0225 family.

This is UPF0225 protein HI_0277 from Haemophilus influenzae (strain ATCC 51907 / DSM 11121 / KW20 / Rd).